Consider the following 544-residue polypeptide: Chaperonin GroEL 2 (544 aa).

Residues 29–32, 86–90, glycine 413, 482–484, and aspartate 498 contribute to the ATP site; these read TLGP, DGTTT, and NVL.

This sequence belongs to the chaperonin (HSP60) family. As to quaternary structure, forms a cylinder of 14 subunits composed of two heptameric rings stacked back-to-back. Interacts with the co-chaperonin GroES.

The protein resides in the cytoplasm. It catalyses the reaction ATP + H2O + a folded polypeptide = ADP + phosphate + an unfolded polypeptide.. In terms of biological role, together with its co-chaperonin GroES, plays an essential role in assisting protein folding. The GroEL-GroES system forms a nano-cage that allows encapsulation of the non-native substrate proteins and provides a physical environment optimized to promote and accelerate protein folding. This is Chaperonin GroEL 2 from Roseiflexus sp. (strain RS-1).